We begin with the raw amino-acid sequence, 430 residues long: Threonine synthase (430 aa).

At Lys-108 the chain carries N6-(pyridoxal phosphate)lysine.

It belongs to the threonine synthase family. Pyridoxal 5'-phosphate is required as a cofactor.

The catalysed reaction is O-phospho-L-homoserine + H2O = L-threonine + phosphate. It participates in amino-acid biosynthesis; L-threonine biosynthesis; L-threonine from L-aspartate: step 5/5. In terms of biological role, catalyzes the gamma-elimination of phosphate from L-phosphohomoserine and the beta-addition of water to produce L-threonine. The sequence is that of Threonine synthase (thrC) from Buchnera aphidicola subsp. Baizongia pistaciae (strain Bp).